A 694-amino-acid polypeptide reads, in one-letter code: Follicle-stimulating hormone receptor (694 aa).

An N-terminal signal peptide occupies residues 1-17; it reads MALLLVSLLAFLSLGSG. 2 disulfide bridges follow: Cys18/Cys25 and Cys23/Cys32. Positions 18 to 46 constitute an LRRNT domain; the sequence is CHHRVCHCSNRVFLCQESKVTEIPSDLPR. The Extracellular portion of the chain corresponds to 18–365; sequence CHHRVCHCSN…EDIMGYDILR (348 aa). LRR repeat units lie at residues 49 to 72, 73 to 97, 98 to 118, 119 to 143, 144 to 169, 170 to 192, 193 to 216, 217 to 240, and 241 to 259; these read LELRFVLTKLRVIPKGAFSGFGDL, EKIEISQNDVLEVIEANVFSNLPKL, HEIRIEKANNLLYIDHDAFQN, LPNLQYLLISNTGIKHLPAVHKIQS, LQKVLLDIQDNINIHTVERNSFMGLS, FESTILRLSKNGIQEIHNCAFNG, TQLDELNLSYNNNLEELPNDVFQG, ASGPVILDISGTRIHSLPNYGLEN, and LKKLRARSTYNLKKLPSLE. 2 N-linked (GlcNAc...) asparagine glycosylation sites follow: Asn191 and Asn199. A glycan (N-linked (GlcNAc...) asparagine) is linked at Asn268. Cystine bridges form between Cys275–Cys345, Cys276–Cys292, Cys276–Cys355, and Cys292–Cys337. Asn293 carries an N-linked (GlcNAc...) asparagine glycan. Tyr334 carries the post-translational modification Sulfotyrosine. The helical transmembrane segment at 366–386 threads the bilayer; it reads VLIWFISILAITGNIIVLVIL. Topologically, residues 387 to 397 are cytoplasmic; sequence ITSQYKLTVPR. The chain crosses the membrane as a helical span at residues 398–420; it reads FLMCNLAFADLCIGIYLLLIASV. The Extracellular segment spans residues 421–442; the sequence is DIHTKSQYHNYAIDWQTGAGCD. The cysteines at positions 441 and 516 are disulfide-linked. A helical membrane pass occupies residues 443-464; sequence AAGFFTVFASELSVYTLTAITL. At 465 to 484 the chain is on the cytoplasmic side; that stretch reads ERWHTITHAMQLECKVQLRH. Residues 485 to 507 traverse the membrane as a helical segment; it reads AASVMLVGWIFAFAVALLPIFGI. Residues 508–527 are Extracellular-facing; that stretch reads STYMKVSICLPMDIDSPLSQ. The chain crosses the membrane as a helical span at residues 528 to 549; the sequence is LYVMSLLVLNVLAFVVICGCYI. Residues 550-572 lie on the Cytoplasmic side of the membrane; sequence HIYLTVRNPNIVSSSSDTKIAKR. A helical transmembrane segment spans residues 573 to 596; it reads MAILIFTDFLCMAPISFFAISASL. The Extracellular portion of the chain corresponds to 597 to 607; that stretch reads KVPLITVSKSK. The helical transmembrane segment at 608-629 threads the bilayer; sequence ILLVLFYPINSCANPFLYAIFT. Topologically, residues 630 to 694 are cytoplasmic; sequence KNFRRDFFIL…LVPLSHLAQN (65 aa).

This sequence belongs to the G-protein coupled receptor 1 family. FSH/LSH/TSH subfamily. As to quaternary structure, homotrimer. Functions as a homotrimer binding the FSH hormone heterodimer composed of CGA and FSHB. Interacts with ARRB2. Interacts with APPL2; interaction is independent of follicle stimulating hormone stimulation. Post-translationally, N-glycosylated; indirectly required for FSH-binding, possibly via a conformational change that allows high affinity binding of hormone. Sulfated.

The protein resides in the cell membrane. Functionally, g protein-coupled receptor for follitropin, the follicle-stimulating hormone. Through cAMP production activates the downstream PI3K-AKT and ERK1/ERK2 signaling pathways. The sequence is that of Follicle-stimulating hormone receptor (FSHR) from Equus caballus (Horse).